A 714-amino-acid polypeptide reads, in one-letter code: Fatty acid oxidation complex subunit alpha (714 aa).

Positions 1-190 are enoyl-CoA hydratase; the sequence is MEMASVFTLN…KLGLVDDVVP (190 aa). Residues 306–714 form a 3-hydroxyacyl-CoA dehydrogenase region; that stretch reads APLNSVGILG…FWKTTATDLQ (409 aa).

In the N-terminal section; belongs to the enoyl-CoA hydratase/isomerase family. This sequence in the central section; belongs to the 3-hydroxyacyl-CoA dehydrogenase family. Heterotetramer of two alpha chains (FadJ) and two beta chains (FadI).

It is found in the cytoplasm. It carries out the reaction a (3S)-3-hydroxyacyl-CoA = a (2E)-enoyl-CoA + H2O. It catalyses the reaction a 4-saturated-(3S)-3-hydroxyacyl-CoA = a (3E)-enoyl-CoA + H2O. The catalysed reaction is a (3S)-3-hydroxyacyl-CoA + NAD(+) = a 3-oxoacyl-CoA + NADH + H(+). The enzyme catalyses (3S)-3-hydroxybutanoyl-CoA = (3R)-3-hydroxybutanoyl-CoA. It participates in lipid metabolism; fatty acid beta-oxidation. Functionally, catalyzes the formation of a hydroxyacyl-CoA by addition of water on enoyl-CoA. Also exhibits 3-hydroxyacyl-CoA epimerase and 3-hydroxyacyl-CoA dehydrogenase activities. This Escherichia coli (strain SE11) protein is Fatty acid oxidation complex subunit alpha.